We begin with the raw amino-acid sequence, 113 residues long: Hydrogenase maturation factor HypA (113 aa).

Histidine 2 provides a ligand contact to Ni(2+). Zn(2+) contacts are provided by cysteine 73, cysteine 76, cysteine 89, and cysteine 92.

This sequence belongs to the HypA/HybF family.

Involved in the maturation of [NiFe] hydrogenases. Required for nickel insertion into the metal center of the hydrogenase. This Paracoccus denitrificans (strain Pd 1222) protein is Hydrogenase maturation factor HypA.